The chain runs to 320 residues: mRNA decay activator protein ZFP36 (320 aa).

Residues 1–15 (MDLSAIYESLMSMSH) form a necessary for nuclear export region. The interval 1–93 (MDLSAIYESL…PTSPTATPTT (93 aa)) is necessary and sufficient for the association with mRNA decay enzymes and mRNA decay activation. 2 necessary for localization of ARE-containing mRNAs to processing bodies (PBs) regions span residues 1 to 167 (MDLS…DLAL) and 93 to 320 (TSSR…SVSE). Positions 17 to 50 (LSPDHGGTESSGGLWNINSSDSIPSGVTSRLTGR) are disordered. A compositionally biased stretch (polar residues) spans 27 to 50 (SGGLWNINSSDSIPSGVTSRLTGR). Ser53 is modified (phosphoserine; by MAPKAPK2). Ser59 is modified (phosphoserine). The stretch at 64–68 (PPPPG) is one P-P-P-P-G repeat. Pro residues predominate over residues 66-85 (PPGFAPLAPRPGPELSPSPT). The interval 66-95 (PPGFAPLAPRPGPELSPSPTSPTATPTTSS) is disordered. A phosphoserine mark is found at Ser81 and Ser83. Thr85 is subject to Phosphothreonine. Position 86 is a phosphoserine (Ser86). Low complexity predominate over residues 86–95 (SPTATPTTSS). Residues 88–161 (TATPTTSSRY…GSRCHFIHNP (74 aa)) form a necessary for nuclear localization region. Residues 90–166 (TPTTSSRYKT…FIHNPTEDLA (77 aa)) are necessary for RNA-binding. 2 consecutive C3H1-type zinc fingers follow at residues 96–124 (RYKT…HGPG) and 134–162 (KYKT…HNPT). The interval 96–187 (RYKTELCRTY…ISFSGLPSGR (92 aa)) is necessary for interaction with PABPN1. The segment at 167-320 (LPGQPHVLRQ…PIFNRISVSE (154 aa)) is necessary for mRNA decay activation. Ser179 bears the Phosphoserine; by MAPKAPK2 mark. The disordered stretch occupies residues 180–310 (FSGLPSGRRT…PQPPAPPRRL (131 aa)). Residue Ser190 is modified to Phosphoserine. The stretch at 191 to 195 (PPPPG) is one P-P-P-P-G repeat. Low complexity predominate over residues 197–209 (SGPSLSSCSFSPS). The residue at position 211 (Ser211) is a Phosphoserine. One copy of the P-P-P-P-G repeat lies at 212 to 216 (PPPPG). Ser221 is subject to Phosphoserine; by MAPK1; in vitro. Thr251 carries the phosphothreonine modification. Residues Ser270 and Ser290 each carry the phosphoserine modification. Low complexity predominate over residues 280–290 (SSGSSLGGSDS). The span at 300-309 (PPQPPAPPRR) shows a compositional bias: pro residues. The segment at 306–320 (PPRRLPIFNRISVSE) is interaction with CNOT1. The residue at position 317 (Ser317) is a Phosphoserine.

As to quaternary structure, associates with cytoplasmic CCR4-NOT and PAN2-PAN3 deadenylase complexes to trigger ARE-containing mRNA deadenylation and decay processes. Part of a mRNA decay activation complex at least composed of poly(A)-specific exoribonucleases CNOT6, EXOSC2 and XRN1 and mRNA-decapping enzymes DCP1A and DCP2. Associates with the RNA exosome complex. Interacts (via phosphorylated form) with 14-3-3 proteins; these interactions promote exclusion of ZFP36 from cytoplasmic stress granules in response to arsenite treatment in a MAPKAPK2-dependent manner and does not prevent CCR4-NOT deadenylase complex recruitment or ZFP36-induced ARE-containing mRNA deadenylation and decay processes. Interacts with 14-3-3 proteins; these interactions occur in response to rapamycin in an Akt-dependent manner. Interacts with AGO2 and AGO4. Interacts (via C-terminus) with CNOT1; this interaction occurs in a RNA-independent manner and induces mRNA deadenylation. Interacts (via N-terminus) with CNOT6. Interacts with CNOT6L. Interacts (via C-terminus) with CNOT7; this interaction occurs in a RNA-independent manner, induces mRNA deadenylation and is inhibited in a phosphorylation MAPKAPK2-dependent manner. Interacts (via unphosphorylated form) with CNOT8; this interaction occurs in a RNA-independent manner and is inhibited in a phosphorylation MAPKAPK2-dependent manner. Interacts with DCP1A. Interacts (via N-terminus) with DCP2. Interacts with EDC3. Interacts (via N-terminus) with EXOSC2. Interacts with heat shock 70 kDa proteins. Interacts with KHSRP; this interaction increases upon cytokine-induced treatment. Interacts with MAP3K4; this interaction enhances the association with SH3KBP1/CIN85. Interacts with MAPKAPK2; this interaction occurs upon skeletal muscle satellite cell activation. Interacts with NCL. Interacts with NUP214; this interaction increases upon lipopolysaccharide (LPS) stimulation. Interacts with PABPC1; this interaction occurs in a RNA-dependent manner. Interacts (via hypophosphorylated form) with PABPN1 (via RRM domain and C-terminal arginine-rich region); this interaction occurs in the nucleus in a RNA-independent manner, decreases in presence of single-stranded poly(A) RNA-oligomer and in a p38 MAPK-dependent-manner and inhibits nuclear poly(A) tail synthesis. Interacts with PAN2. Interacts (via C3H1-type zinc finger domains) with PKM. Interacts (via C3H1-type zinc finger domains) with nuclear RNA poly(A) polymerase. Interacts with PPP2CA; this interaction occurs in LPS-stimulated cells and induces ZFP36 dephosphorylation, and hence may promote ARE-containing mRNAs decay. Interacts (via C-terminus) with PRR5L (via C-terminus); this interaction may accelerate ZFP36-mediated mRNA decay during stress. Interacts (via C-terminus) with SFN; this interaction occurs in a phosphorylation-dependent manner. Interacts (via extreme C-terminal region) with SH3KBP1/CIN85 (via SH3 domains); this interaction enhances MAP3K4-induced phosphorylation of ZFP36 at Ser-59 and Ser-86 and does not alter neither ZFP36 binding to ARE-containing transcripts nor TNF-alpha mRNA decay. Interacts with XRN1. Interacts (via C-terminus and Ser-179 phosphorylated form) with YWHAB; this interaction occurs in a p38/MAPKAPK2-dependent manner, increases cytoplasmic localization of ZFP36 and protects ZFP36 from Ser-179 dephosphorylation by serine/threonine phosphatase 2A, and hence may be crucial for stabilizing ARE-containing mRNAs. Interacts (via phosphorylated form) with YWHAE. Interacts (via C-terminus) with YWHAG; this interaction occurs in a phosphorylation-dependent manner. Interacts with YWHAH; this interaction occurs in a phosphorylation-dependent manner. Interacts with YWHAQ; this interaction occurs in a phosphorylation-dependent manner. Interacts with (via C-terminus) YWHAZ; this interaction occurs in a phosphorylation-dependent manner. Does not interact with SH3KBP1. Interacts (via P-P-P-P-G repeats) with GIGYF2; the interaction is direct. Post-translationally, phosphorylated. Phosphorylation at serine and/or threonine residues occurs in a p38 MAPK- and MAPKAPK2-dependent manner. Phosphorylated by MAPKAPK2 at Ser-53 and Ser-179; phosphorylation increases its stability and cytoplasmic localization, promotes binding to 14-3-3 adapter proteins and inhibits the recruitment of cytoplasmic CCR4-NOT and PAN2-PAN3 deadenylase complexes to the mRNA decay machinery, thereby inhibiting ZFP36-induced ARE-containing mRNA deadenylation and decay processes. Phosphorylation by MAPKAPK2 does not impair ARE-containing RNA-binding. Phosphorylated in a MAPKAPK2- and p38 MAPK-dependent manner upon skeletal muscle satellite cell activation; this phosphorylation inhibits ZFP36-mediated mRNA decay activity, and hence stabilizes MYOD1 mRNA. Phosphorylated by MAPK1 upon mitogen stimulation. Phosphorylated at Ser-59 and Ser-86; these phosphorylations increase in a SH3KBP1-dependent manner. Phosphorylated at serine and threonine residues in a pyruvate kinase PKM- and p38 MAPK-dependent manner. Phosphorylation at Ser-53 may participate in the PKM-mediated degradation of ZFP36 in a p38 MAPK-dependent manner. Dephosphorylated by serine/threonine phosphatase 2A at Ser-179. In terms of processing, ubiquitinated; pyruvate kinase (PKM)-dependent ubiquitination leads to proteasomal degradation through a p38 MAPK signaling pathway.

It is found in the nucleus. The protein localises to the cytoplasm. It localises to the cytoplasmic granule. The protein resides in the P-body. Zinc-finger RNA-binding protein that destabilizes numerous cytoplasmic AU-rich element (ARE)-containing mRNA transcripts by promoting their poly(A) tail removal or deadenylation, and hence provide a mechanism for attenuating protein synthesis. Acts as an 3'-untranslated region (UTR) ARE mRNA-binding adapter protein to communicate signaling events to the mRNA decay machinery. Recruits deadenylase CNOT7 (and probably the CCR4-NOT complex) via association with CNOT1, and hence promotes ARE-mediated mRNA deadenylation. Also functions by recruiting components of the cytoplasmic RNA decay machinery to the bound ARE-containing mRNAs. Self regulates by destabilizing its own mRNA. Binds to 3'-UTR ARE of numerous mRNAs. Also binds to ARE of its own mRNA. Plays a role in anti-inflammatory responses; suppresses tumor necrosis factor (TNF)-alpha production by stimulating ARE-mediated TNF-alpha mRNA decay and several other inflammatory ARE-containing mRNAs in interferon (IFN)- and/or lipopolysaccharide (LPS)-induced macrophages. Also plays a role in the regulation of dendritic cell maturation at the post-transcriptional level, and hence operates as part of a negative feedback loop to limit the inflammatory response. Promotes ARE-mediated mRNA decay of hypoxia-inducible factor HIF1A mRNA during the response of endothelial cells to hypoxia. Positively regulates early adipogenesis of preadipocytes by promoting ARE-mediated mRNA decay of immediate early genes (IEGs). Negatively regulates hematopoietic/erythroid cell differentiation by promoting ARE-mediated mRNA decay of the transcription factor STAT5B mRNA. Plays a role in maintaining skeletal muscle satellite cell quiescence by promoting ARE-mediated mRNA decay of the myogenic determination factor MYOD1 mRNA. Also associates with and regulates the expression of non-ARE-containing target mRNAs at the post-transcriptional level, such as MHC class I mRNAs. Participates in association with argonaute RISC catalytic components in the ARE-mediated mRNA decay mechanism; assists microRNA (miRNA) targeting ARE-containing mRNAs. May also play a role in the regulation of cytoplasmic mRNA decapping; enhances decapping of ARE-containing RNAs, in vitro. Involved in the delivery of target ARE-mRNAs to processing bodies (PBs). In addition to its cytosolic mRNA-decay function, affects nuclear pre-mRNA processing. Negatively regulates nuclear poly(A)-binding protein PABPN1-stimulated polyadenylation activity on ARE-containing pre-mRNA during LPS-stimulated macrophages. Also involved in the regulation of stress granule (SG) and P-body (PB) formation and fusion. Plays a role in the regulation of keratinocyte proliferation, differentiation and apoptosis. Plays a role as a tumor suppressor by inhibiting cell proliferation in breast cancer cells. This chain is mRNA decay activator protein ZFP36, found in Rattus norvegicus (Rat).